A 377-amino-acid chain; its full sequence is MVWVRRWGTTHLENQSRYHIQQSQRYQVKQYLTLDTKLSSQTLSLSHSHTVQPTGVTSIFRNGHMPPVSDIGTPESPVTKLLALGGEHENAMEEVIEDIINMESSFNDEGIGCSETPLLMQRTSILDIYNSDQGMAPANMSLTNASCPANLPVKRELTADTRAMAKERQKKDNHNLIERRRRYNINYRIKELGTLIPKSNDPDMRWNKGTILKASVEYIKWLQKEQQRARELEHRQKKLEHANRRLLLRIQELEIQARAHGLPVMSSLSAVDLAAQVIKQQSYPEENSVDYSQQMPLAHGPNSDVCDGSTAFSDPLSHFTDLSFSAALKEEQQLEEILLDDTVSPFGADPLLSSTSPAASKESSRRSSFSTDDGDDL.

Residues 169–222 (QKKDNHNLIERRRRYNINYRIKELGTLIPKSNDPDMRWNKGTILKASVEYIKWL) enclose the bHLH domain. The disordered stretch occupies residues 349 to 377 (DPLLSSTSPAASKESSRRSSFSTDDGDDL). Low complexity predominate over residues 353 to 370 (SSTSPAASKESSRRSSFS).

Belongs to the MiT/TFE family.

It localises to the nucleus. In terms of biological role, transcriptional regulator that acts as a repressor or an activator. Binds DNA. The polypeptide is Transcription factor EC (TFEC) (Gallus gallus (Chicken)).